The sequence spans 661 residues: Zeaxanthin epoxidase, chloroplastic (661 aa).

A chloroplast-targeting transit peptide spans 1–50 (MASTLFYNSMNLSAAVFSRTHFPIPINKDFPLEFSPCIHTDYHLRSRTRS). Residues 82–110 (RILV…VVFE) and 360–373 (ILTW…LLGD) each bind FAD. Residues 558-607 (CIIGSAPHGDVSGISIAIPKPQVSEMHARISYKDGAFYLTDLRSEHGTWI) form the FHA domain.

Requires FAD as cofactor.

It localises to the plastid. It is found in the chloroplast. It catalyses the reaction all-trans-zeaxanthin + 4 reduced [2Fe-2S]-[ferredoxin] + 2 O2 + 4 H(+) = all-trans-violaxanthin + 4 oxidized [2Fe-2S]-[ferredoxin] + 2 H2O. The protein operates within plant hormone biosynthesis; abscisate biosynthesis. Converts zeaxanthin into antheraxanthin and subsequently violaxanthin. Involved in the epoxidation of zeaxanthin. The polypeptide is Zeaxanthin epoxidase, chloroplastic (Prunus armeniaca (Apricot)).